The following is a 400-amino-acid chain: Enoyl-[acyl-carrier-protein] reductase [NADH] (400 aa).

NAD(+) contacts are provided by residues 48–53 (GSSSGY), 74–75 (FE), 111–112 (DA), and 139–140 (LA). Substrate is bound at residue Y225. The active-site Proton donor is the Y235. Residues K244 and 273–275 (VVT) contribute to the NAD(+) site.

It belongs to the TER reductase family. In terms of assembly, monomer.

It carries out the reaction a 2,3-saturated acyl-[ACP] + NAD(+) = a (2E)-enoyl-[ACP] + NADH + H(+). It participates in lipid metabolism; fatty acid biosynthesis. Involved in the final reduction of the elongation cycle of fatty acid synthesis (FAS II). Catalyzes the reduction of a carbon-carbon double bond in an enoyl moiety that is covalently linked to an acyl carrier protein (ACP). The protein is Enoyl-[acyl-carrier-protein] reductase [NADH] of Aliivibrio salmonicida (strain LFI1238) (Vibrio salmonicida (strain LFI1238)).